A 240-amino-acid chain; its full sequence is Tetrahydromethanopterin S-methyltransferase subunit A (240 aa).

Topologically, residues 1-218 (MADKREPAPG…KFHSGVHAGK (218 aa)) are cytoplasmic. His-85 contacts 5-hydroxybenzimidazolylcob(I)amide. A helical membrane pass occupies residues 219 to 239 (VEGAMIGLTITISLLGLLLLG). Position 240 (Arg-240) is a topological domain, extracellular.

The protein belongs to the MtrA family. In terms of assembly, the complex is composed of 8 subunits; MtrA, MtrB, MtrC, MtrD, MtrE, MtrF, MtrG and MtrH. It depends on 5-hydroxybenzimidazolylcob(I)amide as a cofactor.

The protein localises to the cell membrane. The enzyme catalyses 5-methyl-5,6,7,8-tetrahydromethanopterin + coenzyme M + 2 Na(+)(in) = 5,6,7,8-tetrahydromethanopterin + methyl-coenzyme M + 2 Na(+)(out). It participates in one-carbon metabolism; methanogenesis from CO(2); methyl-coenzyme M from 5,10-methylene-5,6,7,8-tetrahydromethanopterin: step 2/2. Its function is as follows. Part of a complex that catalyzes the formation of methyl-coenzyme M and tetrahydromethanopterin from coenzyme M and methyl-tetrahydromethanopterin. This is an energy-conserving, sodium-ion translocating step. This chain is Tetrahydromethanopterin S-methyltransferase subunit A, found in Methanosarcina mazei (strain ATCC BAA-159 / DSM 3647 / Goe1 / Go1 / JCM 11833 / OCM 88) (Methanosarcina frisia).